The sequence spans 186 residues: Transcription factor FapR (186 aa).

Belongs to the FapR family.

Its function is as follows. Transcriptional factor involved in regulation of membrane lipid biosynthesis by repressing genes involved in fatty acid and phospholipid metabolism. The sequence is that of Transcription factor FapR from Staphylococcus epidermidis (strain ATCC 35984 / DSM 28319 / BCRC 17069 / CCUG 31568 / BM 3577 / RP62A).